A 309-amino-acid polypeptide reads, in one-letter code: Diacylglycerol kinase (309 aa).

The 132-residue stretch at 9-140 (HEIGKVTALT…IDLGRIQDDN (132 aa)) folds into the DAGKc domain. Residues 19-23 (NPLSG), 76-82 (GDGVVSN), and T101 each bind ATP. Mg(2+) contacts are provided by D226, D229, and L231. The Proton acceptor role is filled by D285.

This sequence belongs to the diacylglycerol/lipid kinase family. It depends on Mg(2+) as a cofactor.

It is found in the secreted. It localises to the cell wall. It carries out the reaction a 1,2-diacyl-sn-glycerol + ATP = a 1,2-diacyl-sn-glycero-3-phosphate + ADP + H(+). It catalyses the reaction N-hexadecanoylsphing-4-enine + ATP = N-(hexadecanoyl)-sphing-4-enine-1-phosphate + ADP + H(+). Catalyzes the phosphorylation of diacylglycerol (DAG) into phosphatidic acid. Is involved in the biosynthesis of phosphatidylinositol mannosides (PIMs), probably via a role in the biosynthesis of phosphatidylinositol (PI), a PIM precursor, which is derived from phosphatidic acid. Is also able to phosphorylate other various amphipathic lipids of host and bacterial origin in vitro, such as ceramide. The protein is Diacylglycerol kinase (dagK) of Mycobacterium tuberculosis (strain CDC 1551 / Oshkosh).